The chain runs to 320 residues: Adhesin MafA 1/4 (320 aa).

Residues 1 to 18 form the signal peptide; sequence MRARLLIPILFSVFILSA. The N-palmitoyl cysteine moiety is linked to residue C19. C19 carries S-diacylglycerol cysteine lipidation. The disordered stretch occupies residues 287-320; the sequence is NHTGNSAPSVEADNSHEGYGYSDEAVRQHRQGQP.

The protein belongs to the MafA family.

The protein localises to the cell outer membrane. This is Adhesin MafA 1/4 (mafA1) from Neisseria gonorrhoeae (strain ATCC 700825 / FA 1090).